The primary structure comprises 54 residues: Ovomucoid (54 aa).

A Kazal-like domain is found at 4-54 (VDCSDYPKPVCSLEDMPLCGSDSKTYSNKCNFCNAVVDSNGTLTLSHFGKC). Disulfide bonds link C6–C36, C14–C33, and C22–C54. N43 carries N-linked (GlcNAc...) asparagine glycosylation.

The protein localises to the secreted. This Vultur gryphus (Andean condor) protein is Ovomucoid.